We begin with the raw amino-acid sequence, 88 residues long: MKIKPLKDRVVVKFSSEELEKTPGGIYVPDVAKEKPQKGTVVEIGSEVKEVKVGDTVLFDKYAGSKIKVDDVEYLIIKEEEILGIVEK.

This sequence belongs to the GroES chaperonin family. In terms of assembly, heptamer of 7 subunits arranged in a ring. Interacts with the chaperonin GroEL.

The protein resides in the cytoplasm. Its function is as follows. Together with the chaperonin GroEL, plays an essential role in assisting protein folding. The GroEL-GroES system forms a nano-cage that allows encapsulation of the non-native substrate proteins and provides a physical environment optimized to promote and accelerate protein folding. GroES binds to the apical surface of the GroEL ring, thereby capping the opening of the GroEL channel. The chain is Co-chaperonin GroES from Thermodesulfovibrio yellowstonii (strain ATCC 51303 / DSM 11347 / YP87).